A 208-amino-acid polypeptide reads, in one-letter code: Small ribosomal subunit protein uS4 (208 aa).

Residues 97–158 (TRLDNVIYRM…RAQKYLCVQE (62 aa)) enclose the S4 RNA-binding domain.

The protein belongs to the universal ribosomal protein uS4 family. In terms of assembly, part of the 30S ribosomal subunit. Contacts protein S5. The interaction surface between S4 and S5 is involved in control of translational fidelity.

One of the primary rRNA binding proteins, it binds directly to 16S rRNA where it nucleates assembly of the body of the 30S subunit. Its function is as follows. With S5 and S12 plays an important role in translational accuracy. This Xylella fastidiosa (strain M23) protein is Small ribosomal subunit protein uS4.